The chain runs to 243 residues: Probable transcriptional regulatory protein BDU_30 (243 aa).

It belongs to the TACO1 family.

It localises to the cytoplasm. This Borrelia duttonii (strain Ly) protein is Probable transcriptional regulatory protein BDU_30.